The sequence spans 353 residues: UDP-3-O-acylglucosamine N-acyltransferase (353 aa).

The active-site Proton acceptor is the H258.

This sequence belongs to the transferase hexapeptide repeat family. LpxD subfamily. As to quaternary structure, homotrimer.

It catalyses the reaction a UDP-3-O-[(3R)-3-hydroxyacyl]-alpha-D-glucosamine + a (3R)-hydroxyacyl-[ACP] = a UDP-2-N,3-O-bis[(3R)-3-hydroxyacyl]-alpha-D-glucosamine + holo-[ACP] + H(+). It participates in bacterial outer membrane biogenesis; LPS lipid A biosynthesis. Functionally, catalyzes the N-acylation of UDP-3-O-acylglucosamine using 3-hydroxyacyl-ACP as the acyl donor. Is involved in the biosynthesis of lipid A, a phosphorylated glycolipid that anchors the lipopolysaccharide to the outer membrane of the cell. The chain is UDP-3-O-acylglucosamine N-acyltransferase from Parvibaculum lavamentivorans (strain DS-1 / DSM 13023 / NCIMB 13966).